We begin with the raw amino-acid sequence, 304 residues long: m7GpppX diphosphatase (304 aa).

Substrate contacts are provided by residues glutamate 152, lysine 174, and 235–246 (HYLPSYYHLHVH). Positions 242–246 (HLHVH) match the Histidine triad motif motif. The active-site Nucleophile is the histidine 244.

It belongs to the HIT family.

It localises to the cytoplasm. It is found in the nucleus. The catalysed reaction is a 5'-end (N(7)-methyl 5'-triphosphoguanosine)-ribonucleoside in mRNA + H2O = N(7)-methyl-GMP + a 5'-end diphospho-ribonucleoside in mRNA + 2 H(+). In terms of biological role, decapping scavenger enzyme that catalyzes the cleavage of a residual cap structure following the degradation of mRNAs by the 3'-&gt;5' exosome-mediated mRNA decay pathway. Hydrolyzes cap analog structures like 7-methylguanosine nucleoside triphosphate (m7GpppG) with up to 10 nucleotide substrates (small capped oligoribonucleotides) and specifically releases 5'-phosphorylated RNA fragments and 7-methylguanosine monophosphate (m7GMP). Has no activity towards mRNA molecules longer than 25 nucleotides. May also play a role in the 5'-&gt;3 mRNA decay pathway; m7GDP, the downstream product released by the 5'-&gt;3' mRNA mediated decapping activity, may be also converted by DCS1 to m7GMP. Inhibits mRNA translation. Binds to the m7GpppG cap analog. The chain is m7GpppX diphosphatase (nhm1) from Schizosaccharomyces pombe (strain 972 / ATCC 24843) (Fission yeast).